Consider the following 738-residue polypeptide: Transcription activator of gluconeogenesis SMAC_06113 (738 aa).

Positions 1–65 are disordered; sequence MPDDVGPAEA…KYDPKDPLRP (65 aa). Composition is skewed to basic and acidic residues over residues 28 to 39 and 51 to 64; these read ATTKDDDEKMAE and GDQK…DPLR. A DNA-binding region (zn(2)-C6 fungal-type) is located at residues 74–102; that stretch reads CYACQRAHLTCGDERPCQRCIKRGLAEAC. Disordered regions lie at residues 255–278, 328–404, 530–579, and 636–673; these read SSGA…GDVG, HAYA…KRQR, GTNS…KEQP, and SVPT…TGAN. Composition is skewed to polar residues over residues 337–351 and 530–540; these read TSLQ…SPQP and GTNSDTLSVSS. The 72-residue stretch at 475–546 folds into the PAS domain; it reads ALFEHEEFMH…SVSSKGGRGG (72 aa). Low complexity-rich tracts occupy residues 568–579 and 636–655; these read QQQQSQQQKEQP and SVPT…VNGG.

It belongs to the ERT1/acuK family.

It is found in the nucleus. Functionally, transcription factor which regulates nonfermentable carbon utilization. Activator of gluconeogenetic genes. This Sordaria macrospora (strain ATCC MYA-333 / DSM 997 / K(L3346) / K-hell) protein is Transcription activator of gluconeogenesis SMAC_06113.